The sequence spans 445 residues: Phosphoglucosamine mutase (445 aa).

S102 functions as the Phosphoserine intermediate in the catalytic mechanism. Mg(2+) is bound by residues S102, D241, D243, and D245. S102 is modified (phosphoserine).

It belongs to the phosphohexose mutase family. It depends on Mg(2+) as a cofactor. Post-translationally, activated by phosphorylation.

It catalyses the reaction alpha-D-glucosamine 1-phosphate = D-glucosamine 6-phosphate. In terms of biological role, catalyzes the conversion of glucosamine-6-phosphate to glucosamine-1-phosphate. The chain is Phosphoglucosamine mutase from Cronobacter sakazakii (strain ATCC BAA-894) (Enterobacter sakazakii).